The primary structure comprises 400 residues: Elongation factor Tu (400 aa).

The region spanning Lys-10–Leu-209 is the tr-type G domain. Positions Gly-19–Thr-26 are G1. A GTP-binding site is contributed by Gly-19–Thr-26. Residue Thr-26 coordinates Mg(2+). Residues Gly-61–Asn-65 are G2. The G3 stretch occupies residues Asp-82 to Gly-85. GTP contacts are provided by residues Asp-82 to His-86 and Asn-137 to Asp-140. Residues Asn-137–Asp-140 form a G4 region. A G5 region spans residues Ser-179 to Leu-181.

It belongs to the TRAFAC class translation factor GTPase superfamily. Classic translation factor GTPase family. EF-Tu/EF-1A subfamily. In terms of assembly, monomer.

It localises to the cytoplasm. It catalyses the reaction GTP + H2O = GDP + phosphate + H(+). Functionally, GTP hydrolase that promotes the GTP-dependent binding of aminoacyl-tRNA to the A-site of ribosomes during protein biosynthesis. This Mycoplasma mobile (strain ATCC 43663 / 163K / NCTC 11711) (Mesomycoplasma mobile) protein is Elongation factor Tu.